A 321-amino-acid chain; its full sequence is uncharacterized protein (321 aa).

Residues 1 to 12 (MQGGREVGRESV) are compositionally biased toward basic and acidic residues. The tract at residues 1–85 (MQGGREVGRE…GWGEFEGFQE (85 aa)) is disordered. The segment covering 53-67 (NANSSRLDEGLSSSR) has biased composition (polar residues).

This is an uncharacterized protein from Rattus norvegicus (Rat).